The primary structure comprises 69 residues: Large ribosomal subunit protein bL31 (69 aa).

Zn(2+) is bound by residues cysteine 17, cysteine 19, cysteine 37, and cysteine 40.

This sequence belongs to the bacterial ribosomal protein bL31 family. Type A subfamily. In terms of assembly, part of the 50S ribosomal subunit. The cofactor is Zn(2+).

Functionally, binds the 23S rRNA. The chain is Large ribosomal subunit protein bL31 from Clostridium novyi (strain NT).